Consider the following 224-residue polypeptide: Large ribosomal subunit protein uL3 (224 aa).

An N5-methylglutamine modification is found at Gln-158.

Belongs to the universal ribosomal protein uL3 family. Part of the 50S ribosomal subunit. Forms a cluster with proteins L14 and L19. Post-translationally, methylated by PrmB.

In terms of biological role, one of the primary rRNA binding proteins, it binds directly near the 3'-end of the 23S rRNA, where it nucleates assembly of the 50S subunit. The polypeptide is Large ribosomal subunit protein uL3 (Paracidovorax citrulli (strain AAC00-1) (Acidovorax citrulli)).